The sequence spans 966 residues: Phosphoenolpyruvate carboxylase (966 aa).

Position 10 is a phosphoserine (Ser10). Catalysis depends on residues His171 and Lys601.

This sequence belongs to the PEPCase type 1 family. Homotetramer. It depends on Mg(2+) as a cofactor.

It is found in the cytoplasm. The enzyme catalyses oxaloacetate + phosphate = phosphoenolpyruvate + hydrogencarbonate. With respect to regulation, by light-reversible phosphorylation. Functionally, through the carboxylation of phosphoenolpyruvate (PEP) it forms oxaloacetate, a four-carbon dicarboxylic acid source for the tricarboxylic acid cycle. The sequence is that of Phosphoenolpyruvate carboxylase (PEPC) from Medicago sativa (Alfalfa).